A 155-amino-acid chain; its full sequence is Small ribosomal subunit protein uS7 (155 aa).

The protein belongs to the universal ribosomal protein uS7 family. Part of the 30S ribosomal subunit. Contacts proteins S9 and S11.

In terms of biological role, one of the primary rRNA binding proteins, it binds directly to 16S rRNA where it nucleates assembly of the head domain of the 30S subunit. Is located at the subunit interface close to the decoding center, probably blocks exit of the E-site tRNA. The protein is Small ribosomal subunit protein uS7 of Corynebacterium aurimucosum (strain ATCC 700975 / DSM 44827 / CIP 107346 / CN-1) (Corynebacterium nigricans).